A 592-amino-acid chain; its full sequence is NADH-ubiquinone oxidoreductase chain 5 (592 aa).

A run of 14 helical transmembrane segments spans residues 36 to 56, 68 to 88, 89 to 109, 132 to 152, 169 to 189, 196 to 216, 229 to 249, 256 to 276, 279 to 299, 322 to 342, 364 to 386, 406 to 426, 451 to 471, and 534 to 554; these read LSMV…IYAI, FYII…SDNY, IMMF…ISFW, LFVI…FETM, MMLL…GWLL, TPVS…FVLV, LLVM…MAVV, VMAL…GSSA, LAMY…MSAG, LPFS…MPGL, YIMY…RVTY, STHM…LGYA, LPAM…LTTV, and ALIN…IVFF.

Belongs to the complex I subunit 5 family.

It localises to the mitochondrion inner membrane. The catalysed reaction is a ubiquinone + NADH + 5 H(+)(in) = a ubiquinol + NAD(+) + 4 H(+)(out). Core subunit of the mitochondrial membrane respiratory chain NADH dehydrogenase (Complex I) that is believed to belong to the minimal assembly required for catalysis. Complex I functions in the transfer of electrons from NADH to the respiratory chain. The immediate electron acceptor for the enzyme is believed to be ubiquinone. In Debaryomyces hansenii (strain ATCC 36239 / CBS 767 / BCRC 21394 / JCM 1990 / NBRC 0083 / IGC 2968) (Yeast), this protein is NADH-ubiquinone oxidoreductase chain 5 (ND5).